We begin with the raw amino-acid sequence, 68 residues long: Toxin Cg2 (68 aa).

The LCN-type CS-alpha/beta domain occupies 1 to 66 (KDGYLVNKST…VYPIPGKTCS (66 aa)). 4 disulfides stabilise this stretch: C12–C65, C16–C41, C25–C46, and C29–C48.

The protein belongs to the long (4 C-C) scorpion toxin superfamily. Sodium channel inhibitor family. In terms of tissue distribution, expressed by the venom gland.

Its subcellular location is the secreted. Its function is as follows. Binds to sodium channels (Nav) and inhibits them. The protein is Toxin Cg2 of Centruroides gracilis (Slenderbrown scorpion).